Here is a 102-residue protein sequence, read N- to C-terminus: Large ribosomal subunit protein bL21 (102 aa).

Positions 79–91 are enriched in basic residues; that stretch reads RKDSKRKKGHRQP. The segment at 79–102 is disordered; that stretch reads RKDSKRKKGHRQPYTKLTIDKINA.

The protein belongs to the bacterial ribosomal protein bL21 family. Part of the 50S ribosomal subunit. Contacts protein L20.

In terms of biological role, this protein binds to 23S rRNA in the presence of protein L20. The chain is Large ribosomal subunit protein bL21 from Staphylococcus saprophyticus subsp. saprophyticus (strain ATCC 15305 / DSM 20229 / NCIMB 8711 / NCTC 7292 / S-41).